The sequence spans 394 residues: Elongation factor Tu 1 (394 aa).

A tr-type G domain is found at 10–204 (KPHVNVGTIG…ALDSYIPEPE (195 aa)). The G1 stretch occupies residues 19-26 (GHVDHGKT). 19 to 26 (GHVDHGKT) provides a ligand contact to GTP. Threonine 26 contacts Mg(2+). Residues 60-64 (GITIS) are G2. The interval 81-84 (DCPG) is G3. Residues 81 to 85 (DCPGH) and 136 to 139 (NKCD) contribute to the GTP site. The G4 stretch occupies residues 136 to 139 (NKCD). Positions 174–176 (SAL) are G5.

Belongs to the TRAFAC class translation factor GTPase superfamily. Classic translation factor GTPase family. EF-Tu/EF-1A subfamily. As to quaternary structure, monomer.

The protein localises to the cytoplasm. The enzyme catalyses GTP + H2O = GDP + phosphate + H(+). Its function is as follows. GTP hydrolase that promotes the GTP-dependent binding of aminoacyl-tRNA to the A-site of ribosomes during protein biosynthesis. The chain is Elongation factor Tu 1 from Photorhabdus laumondii subsp. laumondii (strain DSM 15139 / CIP 105565 / TT01) (Photorhabdus luminescens subsp. laumondii).